Here is a 538-residue protein sequence, read N- to C-terminus: Retinoblastoma-binding protein 5 (538 aa).

WD repeat units follow at residues 22 to 63 and 64 to 103; these read DCIS…KIIS and AHIH…CDQR. Lys-129 is covalently cross-linked (Glycyl lysine isopeptide (Lys-Gly) (interchain with G-Cter in SUMO2)). WD repeat units lie at residues 148-188, 196-235, 249-291, and 293-331; these read DDDS…LVAS, SNTT…TCGR, VNRT…KILH, and TRGE…NWSA. Thr-252 is subject to Phosphothreonine; by CDK1. The interval 330–366 is interaction with ASH2L; the sequence is SAFAPDFKELDENVEYEERESEFDIEDEDKSEPEQTG. The segment covering 344 to 360 has biased composition (acidic residues); the sequence is EYEERESEFDIEDEDKS. The disordered stretch occupies residues 344–377; that stretch reads EYEERESEFDIEDEDKSEPEQTGADAAEDEEVDV. Phosphoserine is present on Ser-350. An interaction with WDR5 region spans residues 371-380; that stretch reads EDEEVDVTSV. A phosphoserine mark is found at Ser-388 and Ser-389. The segment at 408-519 is disordered; that stretch reads VEDPEENPYG…LPLEGSTKGK (112 aa). Residues 479-490 show a composition bias toward basic residues; that stretch reads SKKKQAGRPKGS. The segment covering 491 to 510 has biased composition (basic and acidic residues); that stretch reads KGKEKDSPFKPKLYKGDRGL. Position 497 is a phosphoserine; by CDK1 (Ser-497). Phosphoserine is present on Ser-525.

In terms of assembly, component of the SET1 complex, at least composed of the catalytic subunit (SETD1A or SETD1B), WDR5, WDR82, RBBP5, ASH2L/ASH2, CXXC1/CFP1, HCFC1 and DPY30. Core component of several methyltransferase-containing complexes including MLL1/MLL, MLL2/3 (also named ASCOM complex) and MLL4/WBP7. Each complex is at least composed of ASH2L, RBBP5, WDR5, DPY30, one or more specific histone methyltransferases (KMT2A/MLL1, KMT2D/MLL2, KMT2C/MLL3 and KMT2B/MLL4), and the facultative components PAGR1, BACC1, CHD8, E2F6, HCFC1, HCFC2, HSP70, INO80C, KDM6A, KANSL1, LAS1L, MAX, MCRS1, MEN1, MGA, MYST1/MOF, NCOA6, PAXIP1/PTIP, PELP1, PHF20, PRP31, RING2, RUVB1/TIP49A, RUVB2/TIP49B, SENP3, TAF1, TAF4, TAF6, TAF7, TAF9, TEX10 and alpha- and beta-tubulin. Component of a histone methylation complex composed of at least ZNF335, RBBP5, ASH2L and WDR5; the complex may have histone H3-specific methyltransferase activity, however does not have specificity for 'Lys-4' of histone H3. Interacts with ZNF335. Interacts with ASH2L; the interaction is direct. Interacts with WDR5; the interaction is direct. Components of the ZNF335-RBBP5-ASH2L-WDR5 histone methylation complex may associate with components of a nuclear receptor-mediated transcription complex to form a complex at least composed of ZNF335, HCFC1, CCAR2, EMSY, MKI67, RBBP5, ASH2L and WDR5. Within this complex interacts with EMSY. Found in a complex with RBBP5, ASH2L, DPY30, KMT2A, KMT2D and WDR5. Interacts with SETD1A. Interacts with WDR82.

The protein resides in the nucleus. In terms of biological role, in embryonic stem (ES) cells, plays a crucial role in the differentiation potential, particularly along the neural lineage, regulating gene induction and H3 'Lys-4' methylation at key developmental loci, including that mediated by retinoic acid. Does not affect ES cell self-renewal. Component or associated component of some histone methyltransferase complexes which regulates transcription through recruitment of those complexes to gene promoters. As part of the MLL1/MLL complex, involved in mono-, di- and trimethylation at 'Lys-4' of histone H3. Histone H3 'Lys-4' methylation represents a specific tag for epigenetic transcriptional activation. In association with ASH2L and WDR5, stimulates the histone methyltransferase activities of KMT2A, KMT2B, KMT2C, KMT2D, SETD1A and SETD1B. The polypeptide is Retinoblastoma-binding protein 5 (Rbbp5) (Mus musculus (Mouse)).